The sequence spans 265 residues: Hydroxyethylthiazole kinase (265 aa).

Residue Met-50 participates in substrate binding. Residues Arg-125 and Thr-171 each contribute to the ATP site. Substrate is bound at residue Gly-198.

This sequence belongs to the Thz kinase family. The cofactor is Mg(2+).

The catalysed reaction is 5-(2-hydroxyethyl)-4-methylthiazole + ATP = 4-methyl-5-(2-phosphooxyethyl)-thiazole + ADP + H(+). It participates in cofactor biosynthesis; thiamine diphosphate biosynthesis; 4-methyl-5-(2-phosphoethyl)-thiazole from 5-(2-hydroxyethyl)-4-methylthiazole: step 1/1. Catalyzes the phosphorylation of the hydroxyl group of 4-methyl-5-beta-hydroxyethylthiazole (THZ). This is Hydroxyethylthiazole kinase from Salmonella agona (strain SL483).